The sequence spans 88 residues: Small ribosomal subunit protein bS18 (88 aa).

Positions 1–22 are disordered; sequence MSTKNAKPKKEAQRRPSRKAKV.

This sequence belongs to the bacterial ribosomal protein bS18 family. In terms of assembly, part of the 30S ribosomal subunit. Forms a tight heterodimer with protein bS6.

Functionally, binds as a heterodimer with protein bS6 to the central domain of the 16S rRNA, where it helps stabilize the platform of the 30S subunit. The polypeptide is Small ribosomal subunit protein bS18 (rpsR) (Thermus thermophilus (strain ATCC BAA-163 / DSM 7039 / HB27)).